Here is a 324-residue protein sequence, read N- to C-terminus: Phospho-N-acetylmuramoyl-pentapeptide-transferase (324 aa).

9 helical membrane-spanning segments follow: residues 13-33 (VLSA…IFIP), 57-77 (GTPT…MLII), 85-105 (GMIV…DDIL), 121-141 (MILL…NIGT), 143-163 (IIIP…PLVV), 179-199 (IDGL…IVGF), 201-221 (TGHY…LGFL), 238-260 (LALG…IIIV), and 303-323 (VKLV…GFIA).

The protein belongs to the glycosyltransferase 4 family. MraY subfamily. Mg(2+) serves as cofactor.

Its subcellular location is the cell membrane. It catalyses the reaction UDP-N-acetyl-alpha-D-muramoyl-L-alanyl-gamma-D-glutamyl-meso-2,6-diaminopimeloyl-D-alanyl-D-alanine + di-trans,octa-cis-undecaprenyl phosphate = di-trans,octa-cis-undecaprenyl diphospho-N-acetyl-alpha-D-muramoyl-L-alanyl-D-glutamyl-meso-2,6-diaminopimeloyl-D-alanyl-D-alanine + UMP. It functions in the pathway cell wall biogenesis; peptidoglycan biosynthesis. Catalyzes the initial step of the lipid cycle reactions in the biosynthesis of the cell wall peptidoglycan: transfers peptidoglycan precursor phospho-MurNAc-pentapeptide from UDP-MurNAc-pentapeptide onto the lipid carrier undecaprenyl phosphate, yielding undecaprenyl-pyrophosphoryl-MurNAc-pentapeptide, known as lipid I. In Clostridium botulinum (strain Eklund 17B / Type B), this protein is Phospho-N-acetylmuramoyl-pentapeptide-transferase.